Consider the following 343-residue polypeptide: N-acetyl-gamma-glutamyl-phosphate reductase (343 aa).

The active site involves Cys-147.

This sequence belongs to the NAGSA dehydrogenase family. Type 1 subfamily.

It is found in the cytoplasm. The catalysed reaction is N-acetyl-L-glutamate 5-semialdehyde + phosphate + NADP(+) = N-acetyl-L-glutamyl 5-phosphate + NADPH + H(+). It functions in the pathway amino-acid biosynthesis; L-arginine biosynthesis; N(2)-acetyl-L-ornithine from L-glutamate: step 3/4. In terms of biological role, catalyzes the NADPH-dependent reduction of N-acetyl-5-glutamyl phosphate to yield N-acetyl-L-glutamate 5-semialdehyde. The polypeptide is N-acetyl-gamma-glutamyl-phosphate reductase (Staphylococcus aureus (strain MRSA252)).